A 226-amino-acid polypeptide reads, in one-letter code: LysM and putative peptidoglycan-binding domain-containing protein 1 (226 aa).

Phosphoserine is present on residues Ser23 and Ser33. Residues 40–84 enclose the LysM domain; the sequence is LEHQLEPGDTLAGLALKYGVTMEQIKRTNRLYTNDSIFLKKTLYI. Residues 95 to 156 are disordered; it reads NGLDSEEEND…PSHDLSASDF (62 aa). Residues 98 to 107 show a composition bias toward acidic residues; the sequence is DSEEENDGEE. Phosphoserine is present on Ser99. Over residues 142 to 151 the composition is skewed to polar residues; sequence QETSTPSHDL. Ser165, Ser180, Ser193, and Ser211 each carry phosphoserine. A disordered region spans residues 170-226; sequence AAAQKLRKGESGVPEEDTGLYPSSPRMQQRAVLGPVPLTRTSRTQTLRDQEDEIFKL. Residues 215-226 show a composition bias toward basic and acidic residues; that stretch reads TLRDQEDEIFKL.

This chain is LysM and putative peptidoglycan-binding domain-containing protein 1 (Lysmd1), found in Mus musculus (Mouse).